The sequence spans 328 residues: Ketol-acid reductoisomerase (NADP(+)) (328 aa).

Residues 2–182 (AKIYRDVDAS…GATRAGVIET (181 aa)) form the KARI N-terminal Rossmann domain. Residues 25 to 28 (YGIQ), R48, S53, and 83 to 86 (DMEQ) contribute to the NADP(+) site. The active site involves H108. Position 134 (G134) interacts with NADP(+). One can recognise a KARI C-terminal knotted domain in the interval 183-328 (TFAEETETDL…IEMRRLLFGQ (146 aa)). 4 residues coordinate Mg(2+): D191, E195, E227, and E231. S252 contributes to the substrate binding site.

Belongs to the ketol-acid reductoisomerase family. Mg(2+) is required as a cofactor.

It catalyses the reaction (2R)-2,3-dihydroxy-3-methylbutanoate + NADP(+) = (2S)-2-acetolactate + NADPH + H(+). It carries out the reaction (2R,3R)-2,3-dihydroxy-3-methylpentanoate + NADP(+) = (S)-2-ethyl-2-hydroxy-3-oxobutanoate + NADPH + H(+). The protein operates within amino-acid biosynthesis; L-isoleucine biosynthesis; L-isoleucine from 2-oxobutanoate: step 2/4. It functions in the pathway amino-acid biosynthesis; L-valine biosynthesis; L-valine from pyruvate: step 2/4. Functionally, involved in the biosynthesis of branched-chain amino acids (BCAA). Catalyzes an alkyl-migration followed by a ketol-acid reduction of (S)-2-acetolactate (S2AL) to yield (R)-2,3-dihydroxy-isovalerate. In the isomerase reaction, S2AL is rearranged via a Mg-dependent methyl migration to produce 3-hydroxy-3-methyl-2-ketobutyrate (HMKB). In the reductase reaction, this 2-ketoacid undergoes a metal-dependent reduction by NADPH to yield (R)-2,3-dihydroxy-isovalerate. In Pyrobaculum arsenaticum (strain DSM 13514 / JCM 11321 / PZ6), this protein is Ketol-acid reductoisomerase (NADP(+)).